The chain runs to 549 residues: MKNINFNNTQSYQDLKNHFRKIKNIHLRDLFASDLNRFKKFSIIFENEMLIDFSKNRITDETLIYLLNLAKETDVKSGIKLMFSGAKINKTENRSVLHIALRNRTNRPIILNNCNIMLEVNALLEKMKNFSKMVIHGEWKGYTGKSISNVVNIGIGGSDLGPYMVTEALRPYKNHLNMYYVSNIDGTHLTEVLKKINPENTIFLIASKTFTTDETITNAHSAKKWFLHYSQDQSALDKHFFALSANIKNALNFGININNIFKFWDWVGGRFSLWSSAGLSIMLSIGFDNFEKFLDGAHAMDNHFYHTNYKENIPILLALISIWYTNFFGSETEAIFPYDQYMHRFSAYFQQSNMESNGKSINRNGQRINYQTGPIIWGEPGTNGQHAFYQLIHQGTRLIPCDFIAPVFSHNDLNNHHMKLISNFFAQTQALAFGQSRDSILHRLILSKKNQDDIKRILPFKICKGNQPTNSILIRKITPYNLGALIALYEHKIFVQGYILNIFSFDQWGVELGKELSQNIYNYLNINVKNKSYDASTEGLINFYKSFMI.

Residue E355 is the Proton donor of the active site. Residues H386 and K514 contribute to the active site.

It belongs to the GPI family.

It is found in the cytoplasm. It carries out the reaction alpha-D-glucose 6-phosphate = beta-D-fructose 6-phosphate. It participates in carbohydrate biosynthesis; gluconeogenesis. The protein operates within carbohydrate degradation; glycolysis; D-glyceraldehyde 3-phosphate and glycerone phosphate from D-glucose: step 2/4. Functionally, catalyzes the reversible isomerization of glucose-6-phosphate to fructose-6-phosphate. The protein is Glucose-6-phosphate isomerase of Buchnera aphidicola subsp. Acyrthosiphon pisum (strain APS) (Acyrthosiphon pisum symbiotic bacterium).